The chain runs to 622 residues: Low affinity potassium transport system protein Kup (622 aa).

12 helical membrane-spanning segments follow: residues 12-32, 49-69, 101-121, 134-154, 163-183, 213-233, 247-267, 276-296, 337-357, 363-383, 395-415, and 419-439; these read ITLAAIGVVYGDIGTSPLYTL, VFGFLSLIFWLLILVVSLKYL, FLVIIGLIGGSFFYGEVVITP, IIAPQLDTWVVPLAIIVLTLL, GLVGKLFAPIMLAWFLILAAL, VSFVALGAVVLSITGVEALYA, WFTVVLPSLVLNYFGQGALLL, PFFLLAPDWALVPMLIIATLA, IYIPFINWLLYVAVVIVIVSF, LAAAYGIAVTGTMVLTSILST, FLVALILVGLLCIDLPLFSAN, and IVSGGWLPLTLGLVMFIVMTT.

This sequence belongs to the HAK/KUP transporter (TC 2.A.72) family.

It localises to the cell inner membrane. It catalyses the reaction K(+)(in) + H(+)(in) = K(+)(out) + H(+)(out). Responsible for the low-affinity transport of potassium into the cell. Likely operates as a K(+):H(+) symporter. The sequence is that of Low affinity potassium transport system protein Kup from Enterobacter sp. (strain 638).